Reading from the N-terminus, the 1257-residue chain is Receptor tyrosine-protein kinase erbB-2 (1257 aa).

Positions 1 to 22 are cleaved as a signal peptide; it reads MELAAWCRWGFLLALLPPGIAG. Residues 23 to 654 lie on the Extracellular side of the membrane; the sequence is TQVCTGTDMK…PAEQRASPVT (632 aa). Cysteine 26 and cysteine 53 are oxidised to a cystine. N-linked (GlcNAc...) asparagine glycosylation is found at asparagine 68 and asparagine 188. Cystine bridges form between cysteine 163–cysteine 193, cysteine 196–cysteine 205, cysteine 200–cysteine 213, cysteine 221–cysteine 228, cysteine 225–cysteine 236, cysteine 237–cysteine 245, cysteine 241–cysteine 253, cysteine 256–cysteine 265, cysteine 269–cysteine 296, cysteine 300–cysteine 312, cysteine 316–cysteine 332, cysteine 335–cysteine 339, cysteine 343–cysteine 368, cysteine 476–cysteine 506, cysteine 513–cysteine 522, and cysteine 517–cysteine 530. N-linked (GlcNAc...) asparagine glycosylation is present at asparagine 260. Asparagine 532 carries an N-linked (GlcNAc...) asparagine glycan. Disulfide bonds link cysteine 533/cysteine 542, cysteine 546/cysteine 562, cysteine 565/cysteine 578, cysteine 569/cysteine 586, cysteine 589/cysteine 598, cysteine 602/cysteine 625, cysteine 628/cysteine 636, and cysteine 632/cysteine 644. Residue asparagine 573 is glycosylated (N-linked (GlcNAc...) asparagine). Asparagine 631 carries an N-linked (GlcNAc...) asparagine glycan. Residues 655 to 677 form a helical membrane-spanning segment; that stretch reads FIIATVVGVLLFLILVVVVGILI. The required for interaction with KPNB1 and EEA1 stretch occupies residues 678–691; the sequence is KRRRQKIRKYTMRR. Residues 678–691 carry the Nuclear localization signal motif; that stretch reads KRRRQKIRKYTMRR. Residues 678–1257 are Cytoplasmic-facing; that stretch reads KRRRQKIRKY…PEYLGLDVPV (580 aa). The 268-residue stretch at 722–989 folds into the Protein kinase domain; sequence LRKVKVLGSG…RMARDPQRFV (268 aa). ATP is bound by residues 728-736 and lysine 755; that span reads LGSGAFGTV. Aspartate 847 functions as the Proton acceptor in the catalytic mechanism. At tyrosine 879 the chain carries Phosphotyrosine. The interval 1029–1181 is disordered; sequence QQGFFSPDPT…PKTLSPGKNG (153 aa). Phosphoserine occurs at positions 1056, 1080, 1085, and 1109. Tyrosine 1114 carries the post-translational modification Phosphotyrosine. Tyrosine 1141 carries the phosphotyrosine; by autocatalysis modification. Residues 1149–1163 are compositionally biased toward pro residues; the sequence is PQPPLTPEGPLPPVR. Threonine 1168 is modified (phosphothreonine). Residues 1197–1199 form an interaction with PIK3C2B region; that stretch reads EYL. Tyrosine 1198 carries the phosphotyrosine modification. The segment at 1200–1257 is disordered; it reads VPREGTASPPHPSPAFSPAFDNLYYWDQNSSEQGPPPSNFEGTPTAENPEYLGLDVPV. Residue tyrosine 1250 is modified to Phosphotyrosine; by autocatalysis.

This sequence belongs to the protein kinase superfamily. Tyr protein kinase family. EGF receptor subfamily. Homodimer. Heterodimer with EGFR, ERBB3 and ERBB4. Part of a complex with EGFR and either PIK3C2A or PIK3C2B. May interact with PIK3C2B when phosphorylated on Tyr-1198. Interacts with PRKCABP and PLXNB1. Interacts (when phosphorylated on Tyr-1250) with MEMO1. Interacts with MUC1. Interacts (when phosphorylated on Tyr-1141) with GRB7 (via SH2 domain). Interacts (when phosphorylated on Tyr-1250) with ERBIN Interacts with SRC, KPNB1, RANBP2, EEA1, CRM1, CLTC, PTK6, RPA194, MYOC and ACTB. Interacts with HSP90AA1 and HSP90AB1; the interaction suppresses ERBB2 kinase activity. Interacts with SORL1; this interaction regulates ERBB2 subcellular distribution by promoting its recycling after internalization from endosomes back to the plasma membrane, hence stimulates ERBB2-mediated signaling. Interacts with SH3BGRL. Interacts with ROR1. Post-translationally, autophosphorylated. Autophosphorylation occurs in trans, i.e. one subunit of the dimeric receptor phosphorylates tyrosine residues on the other subunit. Ligand-binding increases phosphorylation on tyrosine residues. Signaling via SEMA4C promotes phosphorylation at Tyr-1250. Dephosphorylated by PTPN12.

The protein localises to the cell membrane. The protein resides in the cell projection. Its subcellular location is the ruffle membrane. It localises to the early endosome. It is found in the cytoplasm. The protein localises to the perinuclear region. The protein resides in the nucleus. It catalyses the reaction L-tyrosyl-[protein] + ATP = O-phospho-L-tyrosyl-[protein] + ADP + H(+). Its function is as follows. Protein tyrosine kinase that is part of several cell surface receptor complexes, but that apparently needs a coreceptor for ligand binding. Essential component of a neuregulin-receptor complex, although neuregulins do not interact with it alone. GP30 is a potential ligand for this receptor. Regulates outgrowth and stabilization of peripheral microtubules (MTs). Upon ERBB2 activation, the MEMO1-RHOA-DIAPH1 signaling pathway elicits the phosphorylation and thus the inhibition of GSK3B at cell membrane. This prevents the phosphorylation of APC and CLASP2, allowing its association with the cell membrane. In turn, membrane-bound APC allows the localization of MACF1 to the cell membrane, which is required for microtubule capture and stabilization. Interacts (preferentially with the tyrosine phosphorylated form) with CPNE3; this interaction occurs at the cell membrane and is increased in a growth factor heregulin-dependent manner. Functionally, in the nucleus is involved in transcriptional regulation. Associates with the 5'-TCAAATTC-3' sequence in the PTGS2/COX-2 promoter and activates its transcription. Implicated in transcriptional activation of CDKN1A; the function involves STAT3 and SRC. Involved in the transcription of rRNA genes by RNA Pol I and enhances protein synthesis and cell growth. This chain is Receptor tyrosine-protein kinase erbB-2 (Erbb2), found in Rattus norvegicus (Rat).